The sequence spans 156 residues: Small ribosomal subunit protein uS7 (156 aa).

This sequence belongs to the universal ribosomal protein uS7 family. Part of the 30S ribosomal subunit. Contacts proteins S9 and S11.

Functionally, one of the primary rRNA binding proteins, it binds directly to 16S rRNA where it nucleates assembly of the head domain of the 30S subunit. Is located at the subunit interface close to the decoding center, probably blocks exit of the E-site tRNA. The sequence is that of Small ribosomal subunit protein uS7 from Bordetella petrii (strain ATCC BAA-461 / DSM 12804 / CCUG 43448).